A 315-amino-acid polypeptide reads, in one-letter code: Melanoma-associated antigen 9 (315 aa).

Positions 1–13 (MSLEQRSPHCKPD) are enriched in basic and acidic residues. A disordered region spans residues 1–67 (MSLEQRSPHC…PQSPQGGASS (67 aa)). Low complexity predominate over residues 50-67 (SAAGSSSPPQSPQGGASS). Residues 108 to 307 (LKLKVAELVH…ICYPSLYEEV (200 aa)) enclose the MAGE domain.

As to expression, expressed in many tumors of several types, such as melanoma, head and neck squamous cell carcinoma, lung carcinoma and breast carcinoma, but not in normal tissues except for testes and placenta.

In terms of biological role, not known, though may play a role in embryonal development and tumor transformation or aspects of tumor progression. In Homo sapiens (Human), this protein is Melanoma-associated antigen 9 (MAGEA9).